The following is a 331-amino-acid chain: Homeobox protein DBX1 (331 aa).

2 disordered regions span residues 56–94 (RAVP…ISSN) and 232–331 (KERE…ITVS). The homeobox DNA-binding region spans 173 to 232 (GMLRRAVFSDVQRKALEKMFQKQKYISKPDRKKLAGKLGLKDSQVKIWFQNRRMKWRNSK). Positions 256-266 (DLSDVSKKSSG) are enriched in basic and acidic residues. Low complexity predominate over residues 299–314 (PSSPFNSSSASKPSDF). Acidic residues predominate over residues 315–331 (SDSEEEGGEQEEEITVS).

It belongs to the H2.0 homeobox family.

The protein localises to the nucleus. Its function is as follows. May function within the midpoint progenitor population to inhibit neuronal differentiation, possibly through modulating the function of Xash3. In Xenopus laevis (African clawed frog), this protein is Homeobox protein DBX1 (dbx1).